The sequence spans 200 residues: Phospholipase D (200 aa).

Positions 1 to 25 (MKRKNNKFIEISIAFILGIALGLYG) are cleaved as a signal peptide. One can recognise a PLD phosphodiesterase domain in the interval 142–169 (VPGIAHNKVIIIDKKKVITGSFNFTAAA). Active-site residues include histidine 147, lysine 149, and aspartate 154.

Belongs to the phospholipase D family. As to quaternary structure, homodimer.

Its subcellular location is the secreted. The catalysed reaction is a 1,2-diacyl-sn-glycero-3-phosphocholine + H2O = a 1,2-diacyl-sn-glycero-3-phosphate + choline + H(+). Its function is as follows. Could be a virulence factor. In Rickettsia conorii (strain ATCC VR-613 / Malish 7), this protein is Phospholipase D (pld).